The primary structure comprises 213 residues: NADH-quinone oxidoreductase subunit I (213 aa).

2 4Fe-4S ferredoxin-type domains span residues 74-103 (RFIE…METS) and 113-142 (GNYS…HGTE). [4Fe-4S] cluster contacts are provided by C83, C86, C89, C93, C122, C125, C128, and C132.

It belongs to the complex I 23 kDa subunit family. In terms of assembly, NDH-1 is composed of 14 different subunits. Subunits NuoA, H, J, K, L, M, N constitute the membrane sector of the complex. It depends on [4Fe-4S] cluster as a cofactor.

Its subcellular location is the cell inner membrane. It carries out the reaction a quinone + NADH + 5 H(+)(in) = a quinol + NAD(+) + 4 H(+)(out). In terms of biological role, NDH-1 shuttles electrons from NADH, via FMN and iron-sulfur (Fe-S) centers, to quinones in the respiratory chain. The immediate electron acceptor for the enzyme in this species is believed to be ubiquinone. Couples the redox reaction to proton translocation (for every two electrons transferred, four hydrogen ions are translocated across the cytoplasmic membrane), and thus conserves the redox energy in a proton gradient. This Campylobacter jejuni subsp. jejuni serotype O:6 (strain 81116 / NCTC 11828) protein is NADH-quinone oxidoreductase subunit I.